A 472-amino-acid polypeptide reads, in one-letter code: Tubulin gamma chain (472 aa).

142 to 148 (AGGTGSG) contacts GTP.

This sequence belongs to the tubulin family. In terms of assembly, component of the gamma-tubulin small complex (gamma-TuSC) composed of tubulin gamma chain, gamma-tubulin complex protein 2 (GCP2) and gamma-tubulin complex protein 3 (GCP3). Interacts with GCP2 and GCP3. Interacts with EB1.

The protein localises to the cytoplasm. It localises to the cytoskeleton. The protein resides in the flagellum axoneme. It is found in the flagellum basal body. Its subcellular location is the spindle. The protein localises to the microtubule organizing center. Tubulin is the major constituent of microtubules (Potential). The gamma chain is found at microtubule organizing centers (MTOC) such as the centrosome. Component of the gamma-tubulin small complex (gamma-TuSC) involved in microtubule nucleation for the formation of median bodies and in the biogenesis of flagella. Gamma-TuSC may be required for the correct positioning of EB1 within the trophozoites. This is Tubulin gamma chain from Giardia intestinalis (strain ATCC 50803 / WB clone C6) (Giardia lamblia).